The following is a 788-amino-acid chain: MKDKSIKVLEFNKIQEILKNYTCTKAAKDIIEDLKPYDSMYEVREHLEETKEAFKLLITKGAPPFEGVYDIRSGISLAEKGSALLPGQLLKIAAVLRCARRFKEYINHKEEEESYRVLENICEGIFSLPKIEEEIFNAIEGEDEIADRASSTLYNIRRSLKEKNYSVRDKINSLVRSYSSYLQENIYTVRGDRYVLPVKAEHKGAVPGLVHDQSSTGATLFIEPMSLVNLNNEIKELMLKEKAEIERILTVLSAKINANITGVKTDANIVWELDFIFAKAKFASEYNCTCPTINDEGIVDIIEGRHPLIDRREVVPISVKLGEEFTSLMITGPNTGGKTVTLKTVGLIHLMAMSGLMIPARENSVISYFNNVFADIGDEQSIEQSLSTFSSHMKNIVEIMDKADENSLVLFDELGAGTDPTEGAALAISILENLRKRGTKIIATTHYSELKAYALRKEGVENASVEFDVETLRPTYRLLIGIPGKSNAFEISKRLGLPDYIIDFARENISNENIRFEELIENLQEKSIKAEEDARLAENLKLERDKEKKKYEEKLEGLQKVRDNALIDARREAKNIIKEAKEEADKILKDIRQLERMGYSSDARRKLEEERKKLKDKLDSIEEKEIKTVHEGEALKNVKEGDEVLLASINQKVIVLSKPDNKGDVLVQAGIMKITANIKDLRAAKGSNSNNSSSKIKKSKKLNLNLRRVESSVDLRGMDAEEAIYTVDKYLDEAYLGGLGEVTIVHGKGTGVLRKTIMDMLKGHSHVKKYRLGEYGEGGTGVTVVELK.

332-339 (GPNTGGKT) is a binding site for ATP. In terms of domain architecture, Smr spans 713–788 (VDLRGMDAEE…GTGVTVVELK (76 aa)).

Belongs to the DNA mismatch repair MutS family. MutS2 subfamily. Homodimer. Binds to stalled ribosomes, contacting rRNA.

Endonuclease that is involved in the suppression of homologous recombination and thus may have a key role in the control of bacterial genetic diversity. In terms of biological role, acts as a ribosome collision sensor, splitting the ribosome into its 2 subunits. Detects stalled/collided 70S ribosomes which it binds and splits by an ATP-hydrolysis driven conformational change. Acts upstream of the ribosome quality control system (RQC), a ribosome-associated complex that mediates the extraction of incompletely synthesized nascent chains from stalled ribosomes and their subsequent degradation. Probably generates substrates for RQC. This chain is Endonuclease MutS2, found in Clostridium botulinum (strain Kyoto / Type A2).